The primary structure comprises 274 residues: MKKTAIALLAWFVSSASLAATPWQKITHPVPGAAQSIGSFANGCIIGADTLPVQSDNYQVMRTDQRRYFGHPDLVMFIQRLSHQAQQRGLGTVLIGDMGMPAGGRFNGGHASHQTGLDVDIFLQLPKTRWSQAQLLRPQALDLVSRDGKHVVPSRWSSDIASLIKLAAQDNDVTRIFVNPAIKQQLCLDAGNDRDWLRKVRPWFQHRAHMHVRLRCPADSLECEDQPLPPPGDGCGAELQSWFEPPKLGTTKPEKKTPPPLPPSCQALLDEHVL.

Positions 1–19 are cleaved as a signal peptide; that stretch reads MKKTAIALLAWFVSSASLA. 3 disulfide bridges follow: cysteine 44–cysteine 265, cysteine 187–cysteine 235, and cysteine 216–cysteine 223. Positions 110, 113, 120, 147, 150, and 211 each coordinate Zn(2+). A disordered region spans residues 225–274; it reads DQPLPPPGDGCGAELQSWFEPPKLGTTKPEKKTPPPLPPSCQALLDEHVL.

This sequence belongs to the peptidase M74 family. In terms of assembly, dimer. The cofactor is Zn(2+).

The protein localises to the periplasm. Functionally, murein endopeptidase that cleaves the D-alanyl-meso-2,6-diamino-pimelyl amide bond that connects peptidoglycan strands. Likely plays a role in the removal of murein from the sacculus. The polypeptide is Penicillin-insensitive murein endopeptidase (Salmonella paratyphi B (strain ATCC BAA-1250 / SPB7)).